We begin with the raw amino-acid sequence, 509 residues long: Major envelope glycoprotein (509 aa).

An N-terminal signal peptide occupies residues 1–17 (MVRTAVLILLLVRFSEP). Asn34, Asn156, Asn194, Asn351, Asn381, and Asn423 each carry an N-linked (GlcNAc...) asparagine; by host glycan. Ser479 carries the O-palmitoyl serine; by host lipid modification. A helical membrane pass occupies residues 480–502 (FMLGHAFSFMLTVGVIIFLFCMV). The N-linked (GlcNAc...) asparagine; by host glycan is linked to Asn504.

The protein belongs to the baculoviridae gp64 family. Palmitoylated.

The protein resides in the virion membrane. The protein localises to the host cell membrane. Functionally, envelope phosphoglycoprotein which mediates the fusion of viral and host endosomal membranes leading to virus entry into the host cell. This chain is Major envelope glycoprotein (GP67), found in Choristoneura fumiferana nuclear polyhedrosis virus (CfMNPV).